The primary structure comprises 274 residues: tRNA-cytidine(32) 2-sulfurtransferase (274 aa).

The PP-loop motif signature appears at 40–45; it reads SGGKDS. Residues C115, C118, and C206 each coordinate [4Fe-4S] cluster.

Belongs to the TtcA family. As to quaternary structure, homodimer. Requires Mg(2+) as cofactor. [4Fe-4S] cluster serves as cofactor.

It is found in the cytoplasm. The catalysed reaction is cytidine(32) in tRNA + S-sulfanyl-L-cysteinyl-[cysteine desulfurase] + AH2 + ATP = 2-thiocytidine(32) in tRNA + L-cysteinyl-[cysteine desulfurase] + A + AMP + diphosphate + H(+). The protein operates within tRNA modification. Catalyzes the ATP-dependent 2-thiolation of cytidine in position 32 of tRNA, to form 2-thiocytidine (s(2)C32). The sulfur atoms are provided by the cysteine/cysteine desulfurase (IscS) system. The polypeptide is tRNA-cytidine(32) 2-sulfurtransferase (Pseudomonas fluorescens (strain Pf0-1)).